The following is a 73-amino-acid chain: Sec-independent protein translocase protein TatA (73 aa).

The helical transmembrane segment at 1-21 (MGSFSIWHWLIVLVIVMLVFG) threads the bilayer. A disordered region spans residues 50-73 (KEQIQQSSATAEKTVDVQAKDVNK). Positions 62–73 (KTVDVQAKDVNK) are enriched in basic and acidic residues.

This sequence belongs to the TatA/E family. In terms of assembly, the Tat system comprises two distinct complexes: a TatABC complex, containing multiple copies of TatA, TatB and TatC subunits, and a separate TatA complex, containing only TatA subunits. Substrates initially bind to the TatABC complex, which probably triggers association of the separate TatA complex to form the active translocon.

The protein resides in the cell inner membrane. Its function is as follows. Part of the twin-arginine translocation (Tat) system that transports large folded proteins containing a characteristic twin-arginine motif in their signal peptide across membranes. TatA could form the protein-conducting channel of the Tat system. The chain is Sec-independent protein translocase protein TatA from Polynucleobacter necessarius subsp. necessarius (strain STIR1).